The chain runs to 305 residues: UDP-3-O-acyl-N-acetylglucosamine deacetylase (305 aa).

The Zn(2+) site is built by His-79, His-238, and Asp-242. The Proton donor role is filled by His-265.

The protein belongs to the LpxC family. The cofactor is Zn(2+).

It catalyses the reaction a UDP-3-O-[(3R)-3-hydroxyacyl]-N-acetyl-alpha-D-glucosamine + H2O = a UDP-3-O-[(3R)-3-hydroxyacyl]-alpha-D-glucosamine + acetate. Its pathway is glycolipid biosynthesis; lipid IV(A) biosynthesis; lipid IV(A) from (3R)-3-hydroxytetradecanoyl-[acyl-carrier-protein] and UDP-N-acetyl-alpha-D-glucosamine: step 2/6. In terms of biological role, catalyzes the hydrolysis of UDP-3-O-myristoyl-N-acetylglucosamine to form UDP-3-O-myristoylglucosamine and acetate, the committed step in lipid A biosynthesis. This is UDP-3-O-acyl-N-acetylglucosamine deacetylase from Klebsiella pneumoniae subsp. pneumoniae (strain ATCC 700721 / MGH 78578).